The following is a 128-amino-acid chain: Global transcriptional regulator Spx 1 (128 aa).

Cys10 and Cys13 form a disulfide bridge.

The protein belongs to the ArsC family. Spx subfamily. In terms of assembly, interacts with the C-terminal domain of the alpha subunit of the RNAP.

It localises to the cytoplasm. Global transcriptional regulator that plays a key role in stress response and exerts either positive or negative regulation of genes. Acts by interacting with the C-terminal domain of the alpha subunit of the RNA polymerase (RNAP). This interaction can enhance binding of RNAP to the promoter region of target genes and stimulate their transcription, or block interaction of RNAP with activator. The sequence is that of Global transcriptional regulator Spx 1 from Lactococcus lactis subsp. lactis (strain IL1403) (Streptococcus lactis).